Consider the following 360-residue polypeptide: Phospho-N-acetylmuramoyl-pentapeptide-transferase (360 aa).

The next 10 membrane-spanning stretches (helical) occupy residues 25-45 (RGIL…PWMI), 73-93 (TMGG…WADL), 97-117 (YVWT…VDDY), 132-152 (WKYF…YMTA), 167-187 (TIEI…IVGS), 199-219 (GLAI…CYLS), 236-256 (AGEL…FLWF), 263-283 (VFMG…IAVI), 288-308 (VVLF…MIQV), and 338-358 (VIVR…ATLK).

Belongs to the glycosyltransferase 4 family. MraY subfamily. It depends on Mg(2+) as a cofactor.

The protein localises to the cell inner membrane. It catalyses the reaction UDP-N-acetyl-alpha-D-muramoyl-L-alanyl-gamma-D-glutamyl-meso-2,6-diaminopimeloyl-D-alanyl-D-alanine + di-trans,octa-cis-undecaprenyl phosphate = di-trans,octa-cis-undecaprenyl diphospho-N-acetyl-alpha-D-muramoyl-L-alanyl-D-glutamyl-meso-2,6-diaminopimeloyl-D-alanyl-D-alanine + UMP. The protein operates within cell wall biogenesis; peptidoglycan biosynthesis. Functionally, catalyzes the initial step of the lipid cycle reactions in the biosynthesis of the cell wall peptidoglycan: transfers peptidoglycan precursor phospho-MurNAc-pentapeptide from UDP-MurNAc-pentapeptide onto the lipid carrier undecaprenyl phosphate, yielding undecaprenyl-pyrophosphoryl-MurNAc-pentapeptide, known as lipid I. The protein is Phospho-N-acetylmuramoyl-pentapeptide-transferase of Azotobacter vinelandii (strain DJ / ATCC BAA-1303).